We begin with the raw amino-acid sequence, 277 residues long: Small ribosomal subunit protein uS2 (277 aa).

The interval 247–277 (LSAFESSQDDESDEENREEDLLAKKFDGEAN) is disordered. A compositionally biased stretch (acidic residues) spans 253–264 (SQDDESDEENRE). A compositionally biased stretch (basic and acidic residues) spans 265-277 (EDLLAKKFDGEAN).

Belongs to the universal ribosomal protein uS2 family.

In Chlamydia pneumoniae (Chlamydophila pneumoniae), this protein is Small ribosomal subunit protein uS2 (rpsB).